The following is a 347-amino-acid chain: Selenide, water dikinase (347 aa).

The active site involves cysteine 17. ATP-binding positions include lysine 20 and 48–50 (TRD). Mg(2+) is bound at residue aspartate 51. ATP contacts are provided by residues aspartate 68, aspartate 91, and 139–141 (GHS). Aspartate 91 lines the Mg(2+) pocket. Position 227 (aspartate 227) interacts with Mg(2+).

Belongs to the selenophosphate synthase 1 family. Class I subfamily. In terms of assembly, homodimer. Mg(2+) is required as a cofactor.

The enzyme catalyses hydrogenselenide + ATP + H2O = selenophosphate + AMP + phosphate + 2 H(+). Synthesizes selenophosphate from selenide and ATP. The protein is Selenide, water dikinase of Escherichia coli O139:H28 (strain E24377A / ETEC).